Here is a 151-residue protein sequence, read N- to C-terminus: Superoxide dismutase [Cu-Zn] A (151 aa).

Residue cysteine 6 is the site of S-palmitoyl cysteine attachment. The Cu cation site is built by histidine 45, histidine 47, and histidine 62. A disulfide bridge links cysteine 56 with cysteine 144. Histidine 62, histidine 70, histidine 79, and aspartate 82 together coordinate Zn(2+). Residue histidine 118 participates in Cu cation binding.

The protein belongs to the Cu-Zn superoxide dismutase family. Homodimer, and heterodimer of Superoxide dismutase [Cu-Zn] A and B. The cofactor is Cu cation. It depends on Zn(2+) as a cofactor.

It localises to the cytoplasm. The protein localises to the nucleus. The enzyme catalyses 2 superoxide + 2 H(+) = H2O2 + O2. In terms of biological role, destroys radicals which are normally produced within the cells and which are toxic to biological systems. The chain is Superoxide dismutase [Cu-Zn] A (sod1-a) from Xenopus laevis (African clawed frog).